Consider the following 144-residue polypeptide: Large ribosomal subunit protein uL16 (144 aa).

This sequence belongs to the universal ribosomal protein uL16 family. As to quaternary structure, part of the 50S ribosomal subunit.

Its function is as follows. Binds 23S rRNA and is also seen to make contacts with the A and possibly P site tRNAs. This is Large ribosomal subunit protein uL16 from Porphyromonas gingivalis (strain ATCC 33277 / DSM 20709 / CIP 103683 / JCM 12257 / NCTC 11834 / 2561).